We begin with the raw amino-acid sequence, 91 residues long: uncharacterized protein (91 aa).

Positions 1 to 18 (MKVNLILFSLFLLVSIMA) are cleaved as a signal peptide. Cysteine 19 is lipidated: N-palmitoyl cysteine. Cysteine 19 carries S-diacylglycerol cysteine lipidation.

It localises to the cell membrane. This is an uncharacterized protein from Escherichia coli (strain K12).